A 245-amino-acid polypeptide reads, in one-letter code: Probable 2-phosphosulfolactate phosphatase (245 aa).

This sequence belongs to the ComB family. Requires Mg(2+) as cofactor.

It carries out the reaction (2R)-O-phospho-3-sulfolactate + H2O = (2R)-3-sulfolactate + phosphate. The polypeptide is Probable 2-phosphosulfolactate phosphatase (Synechococcus sp. (strain RCC307)).